The sequence spans 799 residues: Conserved oligomeric Golgi complex subunit 6 (799 aa).

Belongs to the COG6 family.

The protein localises to the golgi apparatus membrane. In terms of biological role, acts as a component of the peripheral membrane COG complex that is involved in intra-Golgi protein trafficking. COG is located at the cis-Golgi, and regulates tethering of retrograde intra-Golgi vesicles and possibly a number of other membrane trafficking events. The protein is Conserved oligomeric Golgi complex subunit 6 (COG6) of Scheffersomyces stipitis (strain ATCC 58785 / CBS 6054 / NBRC 10063 / NRRL Y-11545) (Yeast).